We begin with the raw amino-acid sequence, 361 residues long: Aminomethyltransferase (361 aa).

This sequence belongs to the GcvT family. The glycine cleavage system is composed of four proteins: P, T, L and H.

The enzyme catalyses N(6)-[(R)-S(8)-aminomethyldihydrolipoyl]-L-lysyl-[protein] + (6S)-5,6,7,8-tetrahydrofolate = N(6)-[(R)-dihydrolipoyl]-L-lysyl-[protein] + (6R)-5,10-methylene-5,6,7,8-tetrahydrofolate + NH4(+). The glycine cleavage system catalyzes the degradation of glycine. The protein is Aminomethyltransferase of Bacteroides fragilis (strain ATCC 25285 / DSM 2151 / CCUG 4856 / JCM 11019 / LMG 10263 / NCTC 9343 / Onslow / VPI 2553 / EN-2).